The chain runs to 161 residues: SsrA-binding protein (161 aa).

The disordered stretch occupies residues 137–161 (HDKRTDSKEKDWNRDKARIMKSSLR). The span at 139-154 (KRTDSKEKDWNRDKAR) shows a compositional bias: basic and acidic residues.

It belongs to the SmpB family.

It is found in the cytoplasm. In terms of biological role, required for rescue of stalled ribosomes mediated by trans-translation. Binds to transfer-messenger RNA (tmRNA), required for stable association of tmRNA with ribosomes. tmRNA and SmpB together mimic tRNA shape, replacing the anticodon stem-loop with SmpB. tmRNA is encoded by the ssrA gene; the 2 termini fold to resemble tRNA(Ala) and it encodes a 'tag peptide', a short internal open reading frame. During trans-translation Ala-aminoacylated tmRNA acts like a tRNA, entering the A-site of stalled ribosomes, displacing the stalled mRNA. The ribosome then switches to translate the ORF on the tmRNA; the nascent peptide is terminated with the 'tag peptide' encoded by the tmRNA and targeted for degradation. The ribosome is freed to recommence translation, which seems to be the essential function of trans-translation. The chain is SsrA-binding protein from Aliivibrio salmonicida (strain LFI1238) (Vibrio salmonicida (strain LFI1238)).